Here is a 490-residue protein sequence, read N- to C-terminus: ATP synthase subunit alpha 1 (490 aa).

171-178 (GDNGLGKS) is a binding site for ATP.

Belongs to the ATPase alpha/beta chains family. As to quaternary structure, F-type ATPases have 2 components, CF(1) - the catalytic core - and CF(0) - the membrane proton channel. CF(1) has five subunits: alpha(3), beta(3), gamma(1), delta(1), epsilon(1). CF(0) has three main subunits: a(1), b(2) and c(9-12). The alpha and beta chains form an alternating ring which encloses part of the gamma chain. CF(1) is attached to CF(0) by a central stalk formed by the gamma and epsilon chains, while a peripheral stalk is formed by the delta and b chains.

The protein resides in the cell inner membrane. The enzyme catalyses ATP + H2O + 4 H(+)(in) = ADP + phosphate + 5 H(+)(out). Its function is as follows. Produces ATP from ADP in the presence of a proton gradient across the membrane. The alpha chain is a regulatory subunit. This chain is ATP synthase subunit alpha 1, found in Legionella pneumophila (strain Corby).